The primary structure comprises 241 residues: Zinc finger CCHC domain-containing protein 24 (241 aa).

Phosphoserine is present on residues Ser-65 and Ser-93. Residues 132–149 (YLCHLCFNKGHYIKDCPQ) form a CCHC-type zinc finger.

The protein is Zinc finger CCHC domain-containing protein 24 (ZCCHC24) of Homo sapiens (Human).